The sequence spans 157 residues: Transcriptional regulator MraZ (157 aa).

2 SpoVT-AbrB domains span residues 7–52 (TYTM…AGGN) and 83–126 (SETL…EPER).

This sequence belongs to the MraZ family. As to quaternary structure, forms oligomers.

Its subcellular location is the cytoplasm. The protein resides in the nucleoid. In Xanthobacter autotrophicus (strain ATCC BAA-1158 / Py2), this protein is Transcriptional regulator MraZ.